The sequence spans 148 residues: Prefoldin subunit alpha (148 aa).

This sequence belongs to the prefoldin subunit alpha family. Heterohexamer of two alpha and four beta subunits.

It localises to the cytoplasm. In terms of biological role, molecular chaperone capable of stabilizing a range of proteins. Seems to fulfill an ATP-independent, HSP70-like function in archaeal de novo protein folding. The sequence is that of Prefoldin subunit alpha (pfdA) from Pyrococcus horikoshii (strain ATCC 700860 / DSM 12428 / JCM 9974 / NBRC 100139 / OT-3).